Here is a 523-residue protein sequence, read N- to C-terminus: Acetyl-CoA hydrolase (523 aa).

277-281 (GIGNI) lines the CoA pocket. E302 acts as the 5-glutamyl coenzyme A thioester intermediate in catalysis. CoA-binding residues include N392 and G396.

This sequence belongs to the acetyl-CoA hydrolase/transferase family.

Its subcellular location is the cytoplasm. It catalyses the reaction acetyl-CoA + H2O = acetate + CoA + H(+). Its function is as follows. Presumably involved in regulating the intracellular acetyl-CoA pool for fatty acid and cholesterol synthesis and fatty acid oxidation. The sequence is that of Acetyl-CoA hydrolase (ACH1) from Kluyveromyces lactis (strain ATCC 8585 / CBS 2359 / DSM 70799 / NBRC 1267 / NRRL Y-1140 / WM37) (Yeast).